A 90-amino-acid polypeptide reads, in one-letter code: Elongation factor 1-beta (90 aa).

The protein belongs to the EF-1-beta/EF-1-delta family.

In terms of biological role, promotes the exchange of GDP for GTP in EF-1-alpha/GDP, thus allowing the regeneration of EF-1-alpha/GTP that could then be used to form the ternary complex EF-1-alpha/GTP/AAtRNA. The polypeptide is Elongation factor 1-beta (Desulfurococcus amylolyticus (strain DSM 18924 / JCM 16383 / VKM B-2413 / 1221n) (Desulfurococcus kamchatkensis)).